Here is a 456-residue protein sequence, read N- to C-terminus: Bis(5'-adenosyl)-triphosphatase enpp4 (456 aa).

Positions 1-18 (MFNMKILVIPLFWGLVTG) are cleaved as a signal peptide. The Extracellular segment spans residues 19–410 (YKGNSSDSSA…DQWCINLPEA (392 aa)). Residues Asp-37 and Thr-73 each coordinate Zn(2+). The active-site AMP-threonine intermediate is Thr-73. Asn-94 provides a ligand contact to substrate. Residue Asn-148 is glycosylated (N-linked (GlcNAc...) asparagine). A substrate-binding site is contributed by Tyr-157. An N-linked (GlcNAc...) asparagine glycan is attached at Asn-169. Zn(2+) contacts are provided by Asp-192, His-196, Asp-240, and His-241. Residue Asp-192 participates in substrate binding. A disulfide bridge connects residues Cys-257 and Cys-290. N-linked (GlcNAc...) asparagine glycosylation is found at Asn-279 and Asn-330. His-339 contacts Zn(2+). The N-linked (GlcNAc...) asparagine glycan is linked to Asn-389. A disulfide bridge links Cys-397 with Cys-404. Residues 411–431 (IGIVVSALLVLTMLTGLMIFM) form a helical membrane-spanning segment. The Cytoplasmic portion of the chain corresponds to 432–456 (RSRASTSRPFSRLQLQEDDDDPLID).

This sequence belongs to the nucleotide pyrophosphatase/phosphodiesterase family. Zn(2+) is required as a cofactor.

It localises to the cell membrane. It catalyses the reaction P(1),P(3)-bis(5'-adenosyl) triphosphate + H2O = AMP + ADP + 2 H(+). In terms of biological role, hydrolyzes extracellular Ap3A into AMP and ADP, and Ap4A into AMP and ATP. Ap3A and Ap4A are diadenosine polyphosphates thought to induce proliferation of vascular smooth muscle cells. Acts as a procoagulant, mediating platelet aggregation at the site of nascent thrombus via release of ADP from Ap3A and activation of ADP receptors. The chain is Bis(5'-adenosyl)-triphosphatase enpp4 (Enpp4) from Mus musculus (Mouse).